The primary structure comprises 250 residues: DNA repair protein RecO (250 aa).

The protein belongs to the RecO family.

Functionally, involved in DNA repair and RecF pathway recombination. The polypeptide is DNA repair protein RecO (Staphylococcus aureus (strain MW2)).